Consider the following 127-residue polypeptide: Holo-[acyl-carrier-protein] synthase (127 aa).

Residues D9 and E58 each contribute to the Mg(2+) site.

The protein belongs to the P-Pant transferase superfamily. AcpS family. The cofactor is Mg(2+).

Its subcellular location is the cytoplasm. It carries out the reaction apo-[ACP] + CoA = holo-[ACP] + adenosine 3',5'-bisphosphate + H(+). Transfers the 4'-phosphopantetheine moiety from coenzyme A to a Ser of acyl-carrier-protein. The sequence is that of Holo-[acyl-carrier-protein] synthase from Shewanella baltica (strain OS195).